The sequence spans 209 residues: Outer-membrane lipoprotein carrier protein (209 aa).

The N-terminal stretch at 1–23 (MKNLLKKSLLGLAFLSLNGFAFA) is a signal peptide.

Belongs to the LolA family. As to quaternary structure, monomer.

Its subcellular location is the periplasm. Its function is as follows. Participates in the translocation of lipoproteins from the inner membrane to the outer membrane. Only forms a complex with a lipoprotein if the residue after the N-terminal Cys is not an aspartate (The Asp acts as a targeting signal to indicate that the lipoprotein should stay in the inner membrane). This is Outer-membrane lipoprotein carrier protein from Glaesserella parasuis serovar 5 (strain SH0165) (Haemophilus parasuis).